The sequence spans 480 residues: Ftsk domain-containing protein YdcQ (480 aa).

2 helical membrane-spanning segments follow: residues valine 25–tryptophan 45 and serine 71–phenylalanine 91. The FtsK domain occupies methionine 217 to glycine 399. Glycine 234–threonine 241 contributes to the ATP binding site.

The protein localises to the cell membrane. The polypeptide is Ftsk domain-containing protein YdcQ (ydcQ) (Bacillus subtilis (strain 168)).